Reading from the N-terminus, the 229-residue chain is Secretory carrier-associated membrane protein 4 (229 aa).

Topologically, residues 1–39 (MSEKENNFPPLPKFIPVKPCFYQNFSDEIPVEHQVLVKR) are cytoplasmic. 4 helical membrane-spanning segments follow: residues 40–60 (IYRLWMFYCATLGVNLIACLA), 61–81 (WWIGGGSGTNFGLAFVWLLLF), 105–125 (FMAFFFIFGAQFVLTVIQAIG), and 149–169 (VVMLLPAIMFSVSAAMMAIAI). The Cytoplasmic segment spans residues 170 to 229 (MKVHRIYRGAGGSFQKAQTEWNTGTWRNPPSREAQYNNFSGNSLPEYPTVPSYPGSGQWP). Threonine 194 is modified (phosphothreonine). The disordered stretch occupies residues 208–229 (FSGNSLPEYPTVPSYPGSGQWP).

This sequence belongs to the SCAMP family.

Its subcellular location is the membrane. Probably involved in membrane protein trafficking. The protein is Secretory carrier-associated membrane protein 4 (SCAMP4) of Homo sapiens (Human).